The chain runs to 196 residues: RNA-free ribonuclease P (196 aa).

Belongs to the HARP family.

It catalyses the reaction Endonucleolytic cleavage of RNA, removing 5'-extranucleotides from tRNA precursor.. Its function is as follows. RNA-free RNase P that catalyzes the removal of the 5'-leader sequence from pre-tRNA to produce the mature 5'-terminus. The polypeptide is RNA-free ribonuclease P (Thermodesulfovibrio yellowstonii (strain ATCC 51303 / DSM 11347 / YP87)).